Consider the following 639-residue polypeptide: Chaperone protein DnaK (639 aa).

Thr198 is modified (phosphothreonine; by autocatalysis). The interval 604-639 (KSQAQGGDNADAGKQANAAADDVVDAEFEEVKDDKK) is disordered. The segment covering 606 to 624 (QAQGGDNADAGKQANAAAD) has biased composition (low complexity). Residues 625-639 (DVVDAEFEEVKDDKK) show a composition bias toward acidic residues.

It belongs to the heat shock protein 70 family.

Acts as a chaperone. The sequence is that of Chaperone protein DnaK from Shewanella baltica (strain OS223).